A 428-amino-acid polypeptide reads, in one-letter code: Protein ECERIFERUM 26 (428 aa).

Residues 1–36 (MGRSQEQGQGQGPVHSIRLSTVGATRPTETGTTHEP) form a disordered region. Positions 21-36 (TVGATRPTETGTTHEP) are enriched in low complexity.

This sequence belongs to the plant acyltransferase family. As to expression, highly expressed in leaves.

It is found in the cytoplasm. The protein resides in the cytosol. Functionally, involved in biosynthesis of the epicuticular wax. Plays a role in very-long-chain fatty acid (VLCFA) biosynthesis and is required for C30 fatty acid elongation in leaf. Despite its classification as a BAHD acyltransferase based on sequence homology, CER26 does not seem to share the catalytic mechanism of the members of the BAHD family. The chain is Protein ECERIFERUM 26 (CER26) from Arabidopsis thaliana (Mouse-ear cress).